The sequence spans 329 residues: Olfactory receptor 10J3 (329 aa).

The Extracellular segment spans residues 1–26; sequence MPKLNSTFVTEFLFEGFSSFRRQHKL. N5 carries N-linked (GlcNAc...) asparagine glycosylation. A helical transmembrane segment spans residues 27 to 47; sequence VFFVVFLTLYLLTLSGNVIIM. Topologically, residues 48–55 are cytoplasmic; the sequence is TIIRLDHH. A helical transmembrane segment spans residues 56–76; the sequence is LHTPMYFFLCMLSISETCYTV. At 77–100 the chain is on the extracellular side; it reads AIIPHMLSGLLNPHQPIATQSCAT. C98 and C190 are disulfide-bonded. A helical membrane pass occupies residues 101–121; it reads QLFFYLTFGINNCFLLTVMGY. Residues 122–140 are Cytoplasmic-facing; that stretch reads DRYVAICNPLRYSVIMGKR. Residues 141-161 traverse the membrane as a helical segment; that stretch reads ACIQLASGSLGIGLGMAIVQV. The Extracellular portion of the chain corresponds to 162–198; the sequence is TSVFGLPFCDAFVISHFFCDVRHLLKLACTDTTVNEI. The chain crosses the membrane as a helical span at residues 199-218; it reads INFVVSVCVLVLPMGLVFIS. At 219 to 238 the chain is on the cytoplasmic side; the sequence is YVLIISTILKIASAEGQKKA. A helical membrane pass occupies residues 239 to 259; sequence FATCASHLTVVIIHYGCASII. The Extracellular segment spans residues 260 to 272; sequence YLKPKSQSSLGQD. The helical transmembrane segment at 273-293 threads the bilayer; that stretch reads RLISVTYTHHSPTEPCCVQPE. Topologically, residues 294–329 are cytoplasmic; sequence EQGGQRCSAQSRGAKNSVSLMKRGCEGFSFAFINMY.

Belongs to the G-protein coupled receptor 1 family.

It localises to the cell membrane. Odorant receptor. The sequence is that of Olfactory receptor 10J3 (OR10J3) from Homo sapiens (Human).